The chain runs to 158 residues: NADPH-dependent 7-cyano-7-deazaguanine reductase (158 aa).

Cys56 functions as the Thioimide intermediate in the catalytic mechanism. Residue Asp63 is the Proton donor of the active site. Residues 78–80 (LES) and 97–98 (HE) contribute to the substrate site.

It belongs to the GTP cyclohydrolase I family. QueF type 1 subfamily.

The protein resides in the cytoplasm. The catalysed reaction is 7-aminomethyl-7-carbaguanine + 2 NADP(+) = 7-cyano-7-deazaguanine + 2 NADPH + 3 H(+). It participates in tRNA modification; tRNA-queuosine biosynthesis. Catalyzes the NADPH-dependent reduction of 7-cyano-7-deazaguanine (preQ0) to 7-aminomethyl-7-deazaguanine (preQ1). This is NADPH-dependent 7-cyano-7-deazaguanine reductase from Rhodopseudomonas palustris (strain TIE-1).